The primary structure comprises 224 residues: Ribosomal RNA small subunit methyltransferase I (224 aa).

Belongs to the methyltransferase superfamily. RsmI family.

It localises to the cytoplasm. The enzyme catalyses cytidine(1402) in 16S rRNA + S-adenosyl-L-methionine = 2'-O-methylcytidine(1402) in 16S rRNA + S-adenosyl-L-homocysteine + H(+). Functionally, catalyzes the 2'-O-methylation of the ribose of cytidine 1402 (C1402) in 16S rRNA. The sequence is that of Ribosomal RNA small subunit methyltransferase I from Borrelia garinii subsp. bavariensis (strain ATCC BAA-2496 / DSM 23469 / PBi) (Borreliella bavariensis).